Here is a 387-residue protein sequence, read N- to C-terminus: Anhydro-N-acetylmuramic acid kinase (387 aa).

ATP is bound at residue 17–24; sequence GTSMDGVD.

The protein belongs to the anhydro-N-acetylmuramic acid kinase family.

The enzyme catalyses 1,6-anhydro-N-acetyl-beta-muramate + ATP + H2O = N-acetyl-D-muramate 6-phosphate + ADP + H(+). It functions in the pathway amino-sugar metabolism; 1,6-anhydro-N-acetylmuramate degradation. The protein operates within cell wall biogenesis; peptidoglycan recycling. Catalyzes the specific phosphorylation of 1,6-anhydro-N-acetylmuramic acid (anhMurNAc) with the simultaneous cleavage of the 1,6-anhydro ring, generating MurNAc-6-P. Is required for the utilization of anhMurNAc either imported from the medium or derived from its own cell wall murein, and thus plays a role in cell wall recycling. This is Anhydro-N-acetylmuramic acid kinase from Burkholderia pseudomallei (strain K96243).